The primary structure comprises 304 residues: UPF0282 protein TSIB_1029 (304 aa).

The protein belongs to the UPF0282 family.

The protein is UPF0282 protein TSIB_1029 of Thermococcus sibiricus (strain DSM 12597 / MM 739).